The chain runs to 267 residues: Putative F-box protein At5g38810 (267 aa).

An F-box domain is found at 4–53 (RKTFDSIPDDLFVEIALRLSSKSIARCRCVSKLWASILYRQDFTELFITK).

This is Putative F-box protein At5g38810 from Arabidopsis thaliana (Mouse-ear cress).